The primary structure comprises 773 residues: Lon protease homolog 2, peroxisomal (773 aa).

A Lon N-terminal domain is found at 9-198 (LPVILVTSGV…MCIKWMNEKK (190 aa)). 336–343 (GPPGIGKT) provides a ligand contact to ATP. The Lon proteolytic domain maps to 587-766 (PLPAGVCFGL…EDVIGAMMDK (180 aa)). Active-site residues include serine 672 and lysine 715. Residues 771–773 (AKL) carry the Microbody targeting signal motif.

It belongs to the peptidase S16 family.

The protein resides in the peroxisome matrix. It catalyses the reaction Hydrolysis of proteins in presence of ATP.. In terms of biological role, ATP-dependent serine protease that mediates the selective degradation of misfolded and unassembled polypeptides in the peroxisomal matrix. Necessary for type 2 peroxisome targeting signal (PTS2)-containing protein processing and facilitates peroxisome matrix protein import. This is Lon protease homolog 2, peroxisomal from Caenorhabditis elegans.